The primary structure comprises 359 residues: 3-isopropylmalate dehydrogenase (359 aa).

Positions 97, 107, 135, and 224 each coordinate substrate. 3 residues coordinate Mg(2+): D224, D248, and D252. Residue 282 to 294 (GSAPDIAGKDIAN) participates in NAD(+) binding.

Belongs to the isocitrate and isopropylmalate dehydrogenases family. LeuB type 1 subfamily. As to quaternary structure, homodimer. Requires Mg(2+) as cofactor. Mn(2+) serves as cofactor.

It localises to the cytoplasm. The catalysed reaction is (2R,3S)-3-isopropylmalate + NAD(+) = 4-methyl-2-oxopentanoate + CO2 + NADH. It functions in the pathway amino-acid biosynthesis; L-leucine biosynthesis; L-leucine from 3-methyl-2-oxobutanoate: step 3/4. Functionally, catalyzes the oxidation of 3-carboxy-2-hydroxy-4-methylpentanoate (3-isopropylmalate) to 3-carboxy-4-methyl-2-oxopentanoate. The product decarboxylates to 4-methyl-2 oxopentanoate. In Prochlorococcus marinus (strain NATL2A), this protein is 3-isopropylmalate dehydrogenase.